A 712-amino-acid chain; its full sequence is Diacylglycerol kinase 2 (712 aa).

2 Phorbol-ester/DAG-type zinc fingers span residues 72-133 (HHQW…AKDC) and 145-208 (RHHW…GDAC). Positions 338-479 (PDARPLLVFI…RWSVKIVEES (142 aa)) constitute a DAGKc domain.

This sequence belongs to the eukaryotic diacylglycerol kinase family. Monomer. In terms of tissue distribution, expressed in rosette and cauline leaves, flowers, siliques and roots. Highly expressed in young leaves and at lower levels in older leaves. In young seedlings, expressed at the root-shoot junction zone and vascular bundles of the cotyledons. In older plants, expressed in root tip, central cylinder, root hair, leaf mesophyll cells and guard cells, sepals, filaments of the anthers, stigma, valves of young and early adult siliques and hilum of seeds.

It is found in the endoplasmic reticulum. It catalyses the reaction a 1,2-diacyl-sn-glycerol + ATP = a 1,2-diacyl-sn-glycero-3-phosphate + ADP + H(+). The enzyme catalyses 1-octadecanoyl-2-(5Z,8Z,11Z,14Z-eicosatetraenoyl)-sn-glycerol + ATP = 1-octadecanoyl-2-(5Z,8Z,11Z,14Z-eicosatetraenoyl)-sn-glycero-3-phosphate + ADP + H(+). It carries out the reaction 1,2-di-(9Z-octadecenoyl)-sn-glycerol + ATP = 1,2-di-(9Z-octadecenoyl)-sn-glycero-3-phosphate + ADP + H(+). Phosphorylates the second messenger diacylglycerol (DAG) to generate phosphatidic acid (PA), another important signaling molecule. PA is required for plant development and responses to abiotic stress and pathogen attack. May be involved in the accumulation of PA during cold stress. Involved in response to freezing stress by modulating the accumulation of PA. Exhibits high specificity for the unsaturated DAG analogs 1-stearoyl-2-arachidonoyl-sn-glycerol (1,2-SAG) and 1,2-dioleoyl-sn-glycerol (1,2-DOG). Exhibits high specificity for 1-palmitoyl, 2-oleoyl-sn-glycerol (1,2 POG), 1-stearoyl, 2-linoleoyl-sn-glycerol (1,2-SLG) and 1-oleoyl, 2-palmitoyl-sn-glycerol (1,2-OPG). Has almost no activity toward 1,2-dioctanoyl-sn-glycerol (1,2-DOCG), 1,2-dipalmitoyl-sn-glycerol (1,2-DPG), 1,2-dimyristoyl-sn-glycerol (1,2-DMG) and 1-oleoyl-2-acetyl-sn-glycerol (1,2-OAG). Functions together with DGK4 in male gametophyte development and biosynthesis of phosphatidylglycerol and phosphatidylinositol in the endoplasmic reticulum (ER). Involved in PA production for pollen grain growth, as well as leaf and root growth. In Arabidopsis thaliana (Mouse-ear cress), this protein is Diacylglycerol kinase 2.